We begin with the raw amino-acid sequence, 580 residues long: Membrane protein insertase YidC (580 aa).

The next 6 membrane-spanning stretches (helical) occupy residues 5–25 (SVTG…FMSP), 259–279 (KYFV…LDGS), 362–382 (GLII…LSLA), 427–447 (LGGC…FYVF), 477–497 (IPMY…TVFV), and 513–533 (IMLY…PSGL).

This sequence belongs to the OXA1/ALB3/YidC family. Type 1 subfamily. In terms of assembly, interacts with the Sec translocase complex via SecD. Specifically interacts with transmembrane segments of nascent integral membrane proteins during membrane integration.

It is found in the cell inner membrane. In terms of biological role, required for the insertion and/or proper folding and/or complex formation of integral membrane proteins into the membrane. Involved in integration of membrane proteins that insert both dependently and independently of the Sec translocase complex, as well as at least some lipoproteins. Aids folding of multispanning membrane proteins. In Chlorobium phaeovibrioides (strain DSM 265 / 1930) (Prosthecochloris vibrioformis (strain DSM 265)), this protein is Membrane protein insertase YidC.